Here is a 251-residue protein sequence, read N- to C-terminus: Octanoyltransferase (251 aa).

Positions 29–216 (GVIQDTLLLL…NFGFIFKEQV (188 aa)) constitute a BPL/LPL catalytic domain. Residues 74-81 (RGGDVTFH), 146-148 (AIG), and 159-161 (GFA) contribute to the substrate site. C177 acts as the Acyl-thioester intermediate in catalysis.

The protein belongs to the LipB family.

Its subcellular location is the cytoplasm. It carries out the reaction octanoyl-[ACP] + L-lysyl-[protein] = N(6)-octanoyl-L-lysyl-[protein] + holo-[ACP] + H(+). The protein operates within protein modification; protein lipoylation via endogenous pathway; protein N(6)-(lipoyl)lysine from octanoyl-[acyl-carrier-protein]: step 1/2. Functionally, catalyzes the transfer of endogenously produced octanoic acid from octanoyl-acyl-carrier-protein onto the lipoyl domains of lipoate-dependent enzymes. Lipoyl-ACP can also act as a substrate although octanoyl-ACP is likely to be the physiological substrate. The sequence is that of Octanoyltransferase from Koribacter versatilis (strain Ellin345).